Reading from the N-terminus, the 228-residue chain is ATP-dependent dethiobiotin synthetase BioD (228 aa).

14 to 19 contacts ATP; the sequence is DAGKTL. Threonine 18 lines the Mg(2+) pocket. Lysine 39 is an active-site residue. ATP contacts are provided by residues aspartate 56, 117 to 120, and 206 to 208; these read EGAG and PRL. Residues aspartate 56 and glutamate 117 each contribute to the Mg(2+) site.

This sequence belongs to the dethiobiotin synthetase family. Homodimer. It depends on Mg(2+) as a cofactor.

It localises to the cytoplasm. It carries out the reaction (7R,8S)-7,8-diammoniononanoate + CO2 + ATP = (4R,5S)-dethiobiotin + ADP + phosphate + 3 H(+). It functions in the pathway cofactor biosynthesis; biotin biosynthesis; biotin from 7,8-diaminononanoate: step 1/2. In terms of biological role, catalyzes a mechanistically unusual reaction, the ATP-dependent insertion of CO2 between the N7 and N8 nitrogen atoms of 7,8-diaminopelargonic acid (DAPA, also called 7,8-diammoniononanoate) to form a ureido ring. The chain is ATP-dependent dethiobiotin synthetase BioD from Cellvibrio japonicus (strain Ueda107) (Pseudomonas fluorescens subsp. cellulosa).